We begin with the raw amino-acid sequence, 442 residues long: D-galactonate dehydratase family member SSBG_02010 (442 aa).

Asp-246 is a binding site for Mg(2+). His-248 is a D-arabinonate binding site. Residues Glu-272 and Glu-298 each contribute to the Mg(2+) site. D-arabinonate contacts are provided by Glu-298, Arg-319, His-348, and Glu-375.

It belongs to the mandelate racemase/muconate lactonizing enzyme family. GalD subfamily.

Has no detectable activity with D-mannonate and with a panel of 70 other acid sugars (in vitro), in spite of the conservation of the residues that are expected to be important for catalytic activity and cofactor binding. May have evolved a divergent function. In Streptomyces sp. (strain SPB074), this protein is D-galactonate dehydratase family member SSBG_02010.